A 1132-amino-acid chain; its full sequence is Telomerase reverse transcriptase (1132 aa).

Positions 1 to 230 (MPRAPRCRAV…ARRRGGSASR (230 aa)) are RNA-interacting domain 1. The GQ motif stretch occupies residues 58–197 (VPWDARPPPA…PHASGPRRRL (140 aa)). Residues 137-141 (WGLLL) are required for regulating specificity for telomeric DNA and for processivity for primer elongation. Positions 210–320 (AGVPLGLPAP…SRPPRPWDTP (111 aa)) are disordered. Residues 213 to 234 (PLGLPAPGARRRGGSASRSLPL) are compositionally biased toward low complexity. A Bipartite nuclear localization signal motif is present at residues 222–240 (RRRGGSASRSLPLPKRPRR). Phosphoserine; by PKB/AKT1 is present on Ser-227. A linker region spans residues 231–324 (SLPLPKRPRR…RPWDTPCPPV (94 aa)). Residues 293-304 (RHSHPSVGRQHH) are compositionally biased toward basic residues. Positions 301 to 538 (RQHHAGPPST…VPAAEHRLRE (238 aa)) are required for oligomerization. Residues 310–320 (TSRPPRPWDTP) are compositionally biased toward pro residues. An RNA-interacting domain 2 region spans residues 325–550 (YAETKHFLYS…LAKFLHWLMS (226 aa)). The TFLY; involved in RNA binding signature appears at 328 to 333 (TKHFLY). The tract at residues 376 to 521 (PRRLPRLPQR…MSVRDCAWLR (146 aa)) is QFP motif. Residues 397–417 (LGNHAQCPYGVLLKTHCPLRA) are CP motif. Position 457 is a phosphoserine; by DYRK2 (Ser-457). The region spanning 605–935 (EVRQHREARP…GLFPWCGLLL (331 aa)) is the Reverse transcriptase domain. At Tyr-707 the chain carries Phosphotyrosine; by SRC-type Tyr-kinases. Residues Asp-712, Asp-868, and Asp-869 each contribute to the Mg(2+) site. The required for oligomerization stretch occupies residues 914–928 (LGGTAFVQMPAHGLF). The interval 930–934 (WCGLL) is primer grip sequence. The interval 936-1132 (DTRTLEVQSD…LPSDFKTILD (197 aa)) is CTE.

Belongs to the reverse transcriptase family. Telomerase subfamily. As to quaternary structure, catalytic component of the telomerase holoenzyme complex composed of one molecule of TERT, one molecule of WRAP53/TCAB1, two molecules of H/ACA ribonucleoprotein complex subunits DKC1, NOP10, NHP2 and GAR1, and a telomerase RNA template component (TERC). The telomerase holoenzyme complex is associated with TEP1, SMG6/EST1A and POT1. The molecular chaperone HSP90/P23 complex is required for correct assembly and stabilization of the active telomerase. Interacts directly with HSP90A and PTGES3. Interacts with HSPA1A; the interaction occurs in the absence of TERC and dissociates once the complex has formed. Interacts with RAN; the interaction promotes nuclear export of TERT. Interacts with XPO1. Interacts with PTPN11; the interaction retains TERT in the nucleus. Interacts with NCL (via RRM1 and C-terminal RRM4/Arg/Gly-rich domains); the interaction is important for nucleolar localization of TERT. Interacts with SMARCA4 (via the bromodomain); the interaction regulates Wnt-mediated signaling. Interacts with MCRS1 (isoform MCRS2); the interaction inhibits in vitro telomerase activity. Interacts with PIF1; the interaction has no effect on the elongation activity of TERT. Interacts with PML; the interaction recruits TERT to PML bodies and inhibits telomerase activity. Interacts with GNL3L. Interacts with isoform 1 and isoform 2 of NVL. Interacts with DHX36. Interacts with ATF7. In terms of processing, phosphorylation at Tyr-707 under oxidative stress leads to translocation of TERT to the cytoplasm and reduces its antiapoptotic activity. Dephosphorylated by SHP2/PTPN11 leading to nuclear retention. Phosphorylation at Ser-227 by the AKT pathway promotes nuclear location. Phosphorylation at the G2/M phase at Ser-457 by DYRK2 promotes ubiquitination by the EDVP complex and degradation. Post-translationally, ubiquitinated by the EDVP complex, a E3 ligase complex following phosphorylation at Ser-457 by DYRK2. Ubiquitinated leads to proteasomal degradation. (Microbial infection) In case of infection by HIV-1, the EDVP complex is hijacked by HIV-1 via interaction between HIV-1 Vpr and DCAF1/VPRBP, leading to ubiquitination and degradation. As to expression, expressed at a high level in thymocyte subpopulations, at an intermediate level in tonsil T-lymphocytes, and at a low to undetectable level in peripheral blood T-lymphocytes.

It localises to the nucleus. The protein localises to the nucleolus. It is found in the nucleoplasm. The protein resides in the chromosome. Its subcellular location is the telomere. It localises to the cytoplasm. The protein localises to the PML body. It carries out the reaction DNA(n) + a 2'-deoxyribonucleoside 5'-triphosphate = DNA(n+1) + diphosphate. Functionally, telomerase is a ribonucleoprotein enzyme essential for the replication of chromosome termini in most eukaryotes. Active in progenitor and cancer cells. Inactive, or very low activity, in normal somatic cells. Catalytic component of the teleromerase holoenzyme complex whose main activity is the elongation of telomeres by acting as a reverse transcriptase that adds simple sequence repeats to chromosome ends by copying a template sequence within the RNA component of the enzyme. Catalyzes the RNA-dependent extension of 3'-chromosomal termini with the 6-nucleotide telomeric repeat unit, 5'-TTAGGG-3'. The catalytic cycle involves primer binding, primer extension and release of product once the template boundary has been reached or nascent product translocation followed by further extension. More active on substrates containing 2 or 3 telomeric repeats. Telomerase activity is regulated by a number of factors including telomerase complex-associated proteins, chaperones and polypeptide modifiers. Modulates Wnt signaling. Plays important roles in aging and antiapoptosis. In Homo sapiens (Human), this protein is Telomerase reverse transcriptase (TERT).